The primary structure comprises 820 residues: Serine/threonine-protein phosphatase 4 regulatory subunit 3 (820 aa).

Residues 1 to 100 form the WH1 domain; sequence MSDTRRRVKV…DEIWEKICQV (100 aa). Disordered stretches follow at residues 687 to 711 and 750 to 820; these read EDEEEEGEAVVPPVEKTKTEDDFPE and AANG…RLGS. The span at 701 to 711 shows a compositional bias: basic and acidic residues; it reads EKTKTEDDFPE. The segment covering 750 to 761 has biased composition (polar residues); it reads AANGANSTNSKS. Residues 770 to 784 show a composition bias toward low complexity; sequence SSNGSSSKNTSLTTT. Over residues 798–809 the composition is skewed to acidic residues; it reads YPDDEDEEEEED.

This sequence belongs to the SMEK family. As to quaternary structure, serine/threonine-protein phosphatase 4 (PP4) occurs in different assemblies of the catalytic and one or more regulatory subunits.

Its function is as follows. Regulatory subunit of serine/threonine-protein phosphatase 4 (PP4). The chain is Serine/threonine-protein phosphatase 4 regulatory subunit 3 from Xenopus tropicalis (Western clawed frog).